The following is a 301-amino-acid chain: UPF0282 protein Pcal_1546 (301 aa).

The protein belongs to the UPF0282 family.

The polypeptide is UPF0282 protein Pcal_1546 (Pyrobaculum calidifontis (strain DSM 21063 / JCM 11548 / VA1)).